The sequence spans 129 residues: Small ribosomal subunit protein uS11 (129 aa).

This sequence belongs to the universal ribosomal protein uS11 family. In terms of assembly, part of the 30S ribosomal subunit. Interacts with proteins S7 and S18. Binds to IF-3.

Located on the platform of the 30S subunit, it bridges several disparate RNA helices of the 16S rRNA. Forms part of the Shine-Dalgarno cleft in the 70S ribosome. The chain is Small ribosomal subunit protein uS11 from Rhodopseudomonas palustris (strain BisB5).